The following is a 397-amino-acid chain: Enoyl-[acyl-carrier-protein] reductase [NADH] (397 aa).

NAD(+) contacts are provided by residues 48-53, 74-75, 111-112, and 139-140; these read GASTGY, FE, DA, and VA. Y225 lines the substrate pocket. Y235 (proton donor) is an active-site residue. Residues K244 and 273–275 each bind NAD(+); that span reads VVT.

Belongs to the TER reductase family. As to quaternary structure, monomer.

The enzyme catalyses a 2,3-saturated acyl-[ACP] + NAD(+) = a (2E)-enoyl-[ACP] + NADH + H(+). The protein operates within lipid metabolism; fatty acid biosynthesis. Its function is as follows. Involved in the final reduction of the elongation cycle of fatty acid synthesis (FAS II). Catalyzes the reduction of a carbon-carbon double bond in an enoyl moiety that is covalently linked to an acyl carrier protein (ACP). This chain is Enoyl-[acyl-carrier-protein] reductase [NADH], found in Burkholderia pseudomallei (strain 668).